A 350-amino-acid chain; its full sequence is Cytosolic sulfotransferase 18 (350 aa).

Residue Met1 is modified to N-acetylmethionine. Low complexity predominate over residues 1–17 (MESETLTAKATITTTTL). Residues 1–28 (MESETLTAKATITTTTLPSHDETKTEST) form a disordered region. Residues 19–28 (SHDETKTEST) are compositionally biased toward basic and acidic residues. 93–98 (KTGTTW) is a 3'-phosphoadenylyl sulfate binding site. His155 functions as the Proton acceptor in the catalytic mechanism. 3'-phosphoadenylyl sulfate-binding positions include Arg177, Ser185, Tyr243, and 313-315 (RKG).

This sequence belongs to the sulfotransferase 1 family. As to expression, expressed in roots, leaves and stems. Barely detected in siliques and flowers.

Its subcellular location is the cytoplasm. It carries out the reaction an aliphatic (Z)-desulfo-glucosinolate + 3'-phosphoadenylyl sulfate = a (Z)-omega-(methylsulfanyl)-N-sulfo-alkylhydroximate S-glucoside + adenosine 3',5'-bisphosphate + H(+). With respect to regulation, inhibited by phosphoadenosine 5'-phosphate (PAP). In terms of biological role, sulfotransferase that utilizes 3'-phospho-5'-adenylyl sulfate (PAPS) as sulfonate donor to catalyze the sulfate conjugation of desulfo-glucosinolates (dsGSs), the final step in the biosynthesis of the glucosinolate core structure. Preferred substrate are the long-chain desulfo-glucosinolates, 7-methylthioheptyl and 8-methylthiooctyl, derived from methionine. Substrate preference is desulfo-benzyl glucosinolate &gt; desulfo-4-methylthiobutyl glucosinolate &gt; desulfo-6-methylthiohexyl glucosinolate &gt; desulfo-3-methylthiopropyl glucosinolate &gt; desulfo-indol-3-yl methyl glucosinolate &gt; desulfo-singrin &gt; desulfo-3-butenyl glucosinolate. The chain is Cytosolic sulfotransferase 18 (SOT18) from Arabidopsis thaliana (Mouse-ear cress).